The primary structure comprises 220 residues: 2-hydroxy-3-keto-5-methylthiopentenyl-1-phosphate phosphatase (220 aa).

This sequence belongs to the HAD-like hydrolase superfamily. MtnX family.

The enzyme catalyses 2-hydroxy-5-methylsulfanyl-3-oxopent-1-enyl phosphate + H2O = 1,2-dihydroxy-5-(methylsulfanyl)pent-1-en-3-one + phosphate. Its pathway is amino-acid biosynthesis; L-methionine biosynthesis via salvage pathway; L-methionine from S-methyl-5-thio-alpha-D-ribose 1-phosphate: step 4/6. Dephosphorylates 2-hydroxy-3-keto-5-methylthiopentenyl-1-phosphate (HK-MTPenyl-1-P) yielding 1,2-dihydroxy-3-keto-5-methylthiopentene (DHK-MTPene). The sequence is that of 2-hydroxy-3-keto-5-methylthiopentenyl-1-phosphate phosphatase from Geobacillus thermodenitrificans (strain NG80-2).